A 263-amino-acid polypeptide reads, in one-letter code: Ubiquinone/menaquinone biosynthesis C-methyltransferase UbiE (263 aa).

Positions 86, 107, and 152 each coordinate S-adenosyl-L-methionine.

Belongs to the class I-like SAM-binding methyltransferase superfamily. MenG/UbiE family.

It carries out the reaction a 2-demethylmenaquinol + S-adenosyl-L-methionine = a menaquinol + S-adenosyl-L-homocysteine + H(+). The enzyme catalyses a 2-methoxy-6-(all-trans-polyprenyl)benzene-1,4-diol + S-adenosyl-L-methionine = a 5-methoxy-2-methyl-3-(all-trans-polyprenyl)benzene-1,4-diol + S-adenosyl-L-homocysteine + H(+). It functions in the pathway quinol/quinone metabolism; menaquinone biosynthesis; menaquinol from 1,4-dihydroxy-2-naphthoate: step 2/2. The protein operates within cofactor biosynthesis; ubiquinone biosynthesis. Methyltransferase required for the conversion of demethylmenaquinol (DMKH2) to menaquinol (MKH2) and the conversion of 2-polyprenyl-6-methoxy-1,4-benzoquinol (DDMQH2) to 2-polyprenyl-3-methyl-6-methoxy-1,4-benzoquinol (DMQH2). This is Ubiquinone/menaquinone biosynthesis C-methyltransferase UbiE from Brucella anthropi (strain ATCC 49188 / DSM 6882 / CCUG 24695 / JCM 21032 / LMG 3331 / NBRC 15819 / NCTC 12168 / Alc 37) (Ochrobactrum anthropi).